The chain runs to 459 residues: uncharacterized protein (459 aa).

Positions 9–67 (KLEVGQTFPVTIKRLGINGEGVGYFKRQVVFIPGALPGEEVVAETTKIQRGFAEAKVKK) constitute a TRAM domain. Cys80, Cys86, Cys89, and Cys168 together coordinate [4Fe-4S] cluster. S-adenosyl-L-methionine is bound by residues Gln292, Tyr321, Asp342, and Asp390. The active-site Nucleophile is the Cys417.

The protein belongs to the class I-like SAM-binding methyltransferase superfamily. RNA M5U methyltransferase family.

This is an uncharacterized protein from Bacillus cereus (strain ATCC 10987 / NRS 248).